The primary structure comprises 215 residues: N-(5'-phosphoribosyl)anthranilate isomerase (215 aa).

This sequence belongs to the TrpF family.

It catalyses the reaction N-(5-phospho-beta-D-ribosyl)anthranilate = 1-(2-carboxyphenylamino)-1-deoxy-D-ribulose 5-phosphate. The protein operates within amino-acid biosynthesis; L-tryptophan biosynthesis; L-tryptophan from chorismate: step 3/5. This is N-(5'-phosphoribosyl)anthranilate isomerase from Parvibaculum lavamentivorans (strain DS-1 / DSM 13023 / NCIMB 13966).